A 220-amino-acid chain; its full sequence is Ras-related protein Rab-3A (220 aa).

GTP contacts are provided by S31, S32, V33, G34, K35, T36, S37, T48, P49, S53, and T54. A Mg(2+)-binding site is contributed by T36. The Switch 1 signature appears at 49 to 58; that stretch reads PAFVSTVGID. Mg(2+) is bound by residues T54 and D77. Residue G80 coordinates GTP. The Switch 2 signature appears at 80–96; sequence GQERYRTITTAYYRGAM. Phosphothreonine is present on T86. GTP contacts are provided by N135, K136, D138, A166, and K167. S188 and S190 each carry phosphoserine. The segment at 194–220 is disordered; it reads ADPAVTGAKQGPQLTDQQAPPHQDCAC. Residues C218 and C220 are each lipidated (S-geranylgeranyl cysteine). At C220 the chain carries Cysteine methyl ester.

It belongs to the small GTPase superfamily. Rab family. Interacts with RIMS1 and RIMS2. Interacts with Rabphilin-3A/RPH3A and Rab effector Noc2/RPH3AL. Interacts with SYTL4. Interacts with RAB3IP. Interacts with SGSM1 and SGSM3. Interacts with SYT1. Interacts with MYH9; this interaction is essential for lysosome exocytosis and plasma membrane repair. Interacts with STXBP1; this interaction promotes RAB3A dissociation from the vesicle membrane. Interacts with SNCA. Interacts with GDI1, GDI2, CHM and CHML; phosphorylation at Thr-86 disrupts these interactions. Interacts with MADD (via uDENN domain); the GTP-bound form is preferred for interaction. It depends on Mg(2+) as a cofactor. Phosphorylation of Thr-86 in the switch II region by LRRK2 prevents the association of RAB regulatory proteins, including CHM, CHML and RAB GDP dissociation inhibitors GDI1 and GDI2. Specifically expressed in brain.

The protein resides in the cytoplasm. Its subcellular location is the cytosol. The protein localises to the lysosome. It is found in the cytoplasmic vesicle. It localises to the secretory vesicle. The protein resides in the cell projection. Its subcellular location is the axon. The protein localises to the cell membrane. It is found in the presynapse. It localises to the postsynapse. It carries out the reaction GTP + H2O = GDP + phosphate + H(+). Its activity is regulated as follows. Regulated by guanine nucleotide exchange factors (GEFs) including RAB3IL1 and MADD which promote the exchange of bound GDP for free GTP. Regulated by GTPase activating proteins (GAPs) including RAB3GAP1 and TBC1D10B which increase the GTP hydrolysis activity. Inhibited by GDP dissociation inhibitors (GDIs) which prevent Rab-GDP dissociation. In terms of biological role, the small GTPases Rab are key regulators of intracellular membrane trafficking, from the formation of transport vesicles to their fusion with membranes. Rabs cycle between an inactive GDP-bound form and an active GTP-bound form that is able to recruit to membranes different sets of downstream effectors directly responsible for vesicle formation, movement, tethering and fusion. RAB3A plays a central role in regulated exocytosis and secretion. Controls the recruitment, tethering and docking of secretory vesicles to the plasma membrane. Upon stimulation, switches to its active GTP-bound form, cycles to vesicles and recruits effectors such as RIMS1, RIMS2, Rabphilin-3A/RPH3A, RPH3AL or SYTL4 to help the docking of vesicules onto the plasma membrane. Upon GTP hydrolysis by GTPase-activating protein, dissociates from the vesicle membrane allowing the exocytosis to proceed. Stimulates insulin secretion through interaction with RIMS2 or RPH3AL effectors in pancreatic beta cells. Regulates calcium-dependent lysosome exocytosis and plasma membrane repair (PMR) via the interaction with 2 effectors, SYTL4 and myosin-9/MYH9. Acts as a positive regulator of acrosome content secretion in sperm cells by interacting with RIMS1. Also plays a role in the regulation of dopamine release by interacting with synaptotagmin I/SYT. The protein is Ras-related protein Rab-3A (RAB3A) of Bos taurus (Bovine).